Consider the following 320-residue polypeptide: D-amino-acid oxidase (320 aa).

Residues alanine 13, glycine 14, valine 15, threonine 42, threonine 43, serine 44, glycine 48, and alanine 49 each contribute to the FAD site. D-proline-binding residues include tyrosine 220 and arginine 274. Tyrosine 220 and arginine 274 together coordinate D-serine. FAD contacts are provided by arginine 274, glycine 299, glycine 300, glycine 302, and threonine 304. A D-proline-binding site is contributed by glycine 300. Glycine 300 serves as a coordination point for D-serine.

The protein belongs to the DAMOX/DASOX family. It depends on FAD as a cofactor.

The protein localises to the cytoplasm. It localises to the secreted. The protein resides in the cell wall. The catalysed reaction is a D-alpha-amino acid + O2 + H2O = a 2-oxocarboxylate + H2O2 + NH4(+). Its function is as follows. Catalyzes the oxidative deamination of D-amino acids with broad substrate specificity. Enables the organism to utilize D-amino acids as a source of nutrients. Enables the organism to utilize glycine as a carbon source. The sequence is that of D-amino-acid oxidase from Mycobacterium tuberculosis (strain ATCC 25177 / H37Ra).